Reading from the N-terminus, the 229-residue chain is Prolactin (229 aa).

The first 30 residues, 1-30 (MDNKGWSLKGSLLFLLLLLSDLLLCKSVAS), serve as a signal peptide directing secretion. Cysteine 34 and cysteine 41 are disulfide-bonded. At serine 56 the chain carries Phosphoserine. Asparagine 61 carries an N-linked (GlcNAc...) asparagine glycan. Phosphoserine is present on residues serine 64 and serine 120. Cystine bridges form between cysteine 88–cysteine 204 and cysteine 221–cysteine 229.

This sequence belongs to the somatotropin/prolactin family. As to quaternary structure, interacts with PRLR.

It localises to the secreted. In terms of biological role, prolactin acts primarily on the mammary gland by promoting lactation. The chain is Prolactin (PRL) from Felis catus (Cat).